We begin with the raw amino-acid sequence, 92 residues long: Small ribosomal subunit protein uS19 (92 aa).

It belongs to the universal ribosomal protein uS19 family.

Protein S19 forms a complex with S13 that binds strongly to the 16S ribosomal RNA. This chain is Small ribosomal subunit protein uS19, found in Aliivibrio salmonicida (strain LFI1238) (Vibrio salmonicida (strain LFI1238)).